Here is an 851-residue protein sequence, read N- to C-terminus: DNA mismatch repair protein MutS (851 aa).

602-609 (GPNMSGKS) lines the ATP pocket.

Belongs to the DNA mismatch repair MutS family.

This protein is involved in the repair of mismatches in DNA. It is possible that it carries out the mismatch recognition step. This protein has a weak ATPase activity. In Streptococcus pyogenes serotype M3 (strain SSI-1), this protein is DNA mismatch repair protein MutS.